The following is a 183-amino-acid chain: Ribosome rescue factor SmrB (183 aa).

The 76-residue stretch at 98-173 (LDLHGLTQLQ…GDAALLVLIE (76 aa)) folds into the Smr domain.

Belongs to the SmrB family. In terms of assembly, associates with collided ribosomes, but not with correctly translating polysomes.

Acts as a ribosome collision sensor. Detects stalled/collided disomes (pairs of ribosomes where the leading ribosome is stalled and a second ribosome has collided with it) and endonucleolytically cleaves mRNA at the 5' boundary of the stalled ribosome. Stalled/collided disomes form a new interface (primarily via the 30S subunits) that binds SmrB. Cleaved mRNA becomes available for tmRNA ligation, leading to ribosomal subunit dissociation and rescue of stalled ribosomes. This chain is Ribosome rescue factor SmrB, found in Salmonella agona (strain SL483).